Here is a 279-residue protein sequence, read N- to C-terminus: Movement protein (279 aa).

Residues 247-279 (ESEELNVESPPAAIGSSSASRSEAFRPQVVNGL) form a disordered region. The span at 254–268 (ESPPAAIGSSSASRS) shows a compositional bias: low complexity.

Belongs to the cucumovirus movement protein family.

The protein localises to the host cell junction. Its subcellular location is the host plasmodesma. Its function is as follows. Transports viral genome to neighboring plant cells directly through plasmosdesmata, without any budding. The movement protein allows efficient cell to cell propagation, by bypassing the host cell wall barrier. Acts by forming a tubular structure at the host plasmodesmata, enlarging it enough to allow free passage of virion capsids. The polypeptide is Movement protein (Cucumis sativus (Cucumber)).